Reading from the N-terminus, the 327-residue chain is Tryptophan--tRNA ligase (327 aa).

ATP is bound by residues 9–11 (QPS) and 17–18 (GN). Positions 10–18 (PSGTLTLGN) match the 'HIGH' region motif. Aspartate 132 provides a ligand contact to L-tryptophan. Residues 144–146 (GDD), isoleucine 183, and 192–196 (KMSKS) contribute to the ATP site. The 'KMSKS' region signature appears at 192 to 196 (KMSKS).

The protein belongs to the class-I aminoacyl-tRNA synthetase family. As to quaternary structure, homodimer.

The protein resides in the cytoplasm. The catalysed reaction is tRNA(Trp) + L-tryptophan + ATP = L-tryptophyl-tRNA(Trp) + AMP + diphosphate + H(+). Its function is as follows. Catalyzes the attachment of tryptophan to tRNA(Trp). This chain is Tryptophan--tRNA ligase, found in Oceanobacillus iheyensis (strain DSM 14371 / CIP 107618 / JCM 11309 / KCTC 3954 / HTE831).